The sequence spans 478 residues: Cytochrome c-552 (478 aa).

An N-terminal signal peptide occupies residues 1 to 26; sequence MARTILRARRFFSLILPFFFISSVYA. Residue histidine 94 coordinates heme c. Positions 122, 125, and 126 each coordinate heme. Heme c is bound by residues cysteine 160, cysteine 163, histidine 164, cysteine 209, cysteine 212, and histidine 213. Ca(2+) contacts are provided by glutamate 215, tyrosine 216, lysine 261, and glutamine 263. Residue tyrosine 216 participates in substrate binding. Histidine 264 lines the substrate pocket. Residues histidine 275, cysteine 282, cysteine 285, histidine 286, histidine 301, cysteine 314, cysteine 317, histidine 318, and histidine 393 each coordinate heme c.

The protein belongs to the cytochrome c-552 family. Ca(2+) is required as a cofactor. Heme c serves as cofactor.

It localises to the periplasm. It catalyses the reaction 6 Fe(III)-[cytochrome c] + NH4(+) + 2 H2O = 6 Fe(II)-[cytochrome c] + nitrite + 8 H(+). The protein operates within nitrogen metabolism; nitrate reduction (assimilation). Functionally, catalyzes the reduction of nitrite to ammonia, consuming six electrons in the process. In Citrobacter koseri (strain ATCC BAA-895 / CDC 4225-83 / SGSC4696), this protein is Cytochrome c-552.